The chain runs to 3371 residues: Protocadherin-23 (3371 aa).

The segment at 1 to 40 is disordered; it reads MSPCGRKMGEGRQQRRAPVGKLLLLPGRRDTPHGRSGSSG. Residues 1 to 46 are Cytoplasmic-facing; the sequence is MSPCGRKMGEGRQQRRAPVGKLLLLPGRRDTPHGRSGSSGARTQRS. The chain crosses the membrane as a helical span at residues 47 to 67; that stretch reads LLWLLVHVWLWAASGSSAQLF. Cadherin domains are found at residues 65–167, 168–296, 297–413, 424–539, 540–663, 664–771, 772–881, 877–979, 980–1082, 1085–1191, 1192–1294, 1299–1415, 1404–1510, 1511–1620, 1620–1724, 1725–1829, 1830–1933, 1934–2038, 2039–2130, 2140–2242, 2243–2347, 2347–2447, 2448–2549, 2550–2665, 2666–2769, 2770–2880, and 2881–2988; these read QLFN…SPRF, PLDS…PPVF, EQDE…RPAI, ARVS…PPLF, SQQH…EPIF, WRQV…HPVF, NPST…RPKY, ERPK…HPAF, LRTS…SPSW, EHLV…SPTF, LHDV…RPFF, PGKE…IPEN, SQNI…SPSF, QDEL…NPTF, FISF…APVF, KQHL…APEF, IVSS…SPSF, PTLY…DPVL, EQNP…VIHM, SHHL…SPCF, EQSI…APAF, FLPS…PPVF, SQDF…APEF, TVKS…PPNF, SSLS…APQF, MFSS…EPIF, and TQDQ…TPLA. At 68–2986 the chain is on the extracellular side; the sequence is NLTLSVDEGL…NVSFSSEGTP (2919 aa). 8 N-linked (GlcNAc...) asparagine glycosylation sites follow: asparagine 669, asparagine 772, asparagine 814, asparagine 905, asparagine 966, asparagine 1038, asparagine 1172, and asparagine 1275. 4 N-linked (GlcNAc...) asparagine glycosylation sites follow: asparagine 1487, asparagine 1595, asparagine 1617, and asparagine 1664. A glycan (N-linked (GlcNAc...) asparagine) is linked at asparagine 1898. N-linked (GlcNAc...) asparagine glycosylation is found at asparagine 2054, asparagine 2070, and asparagine 2098. A glycan (N-linked (GlcNAc...) asparagine) is linked at asparagine 2329. 4 N-linked (GlcNAc...) asparagine glycosylation sites follow: asparagine 2479, asparagine 2497, asparagine 2555, and asparagine 2664. 2 N-linked (GlcNAc...) asparagine glycosylation sites follow: asparagine 2929 and asparagine 2977. The chain crosses the membrane as a helical span at residues 2987 to 3017; sequence LAVFASSFSISLVVSFLVFLILICILIVMIL. Topologically, residues 3018–3371 are cytoplasmic; it reads RHKQKDTINN…ELKAEDEVQI (354 aa). Residues 3117 to 3140 are compositionally biased toward basic and acidic residues; it reads KCSDSALSDHESRVPDSGIPRDSD. The interval 3117-3141 is disordered; that stretch reads KCSDSALSDHESRVPDSGIPRDSDQ.

In terms of tissue distribution, cerebral cortex and testis.

The protein localises to the membrane. In terms of biological role, calcium-dependent cell-adhesion protein. The chain is Protocadherin-23 (DCHS2) from Homo sapiens (Human).